Here is a 512-residue protein sequence, read N- to C-terminus: V-type proton ATPase subunit B (512 aa).

Arginine 381 is an ATP binding site. Residues 484–512 (LYGRDREQDDDEDEDEEDPDKSGDKLIDA) are disordered. A compositionally biased stretch (acidic residues) spans 491 to 502 (QDDDEDEDEEDP). Basic and acidic residues predominate over residues 503-512 (DKSGDKLIDA).

It belongs to the ATPase alpha/beta chains family. V-ATPase is a heteromultimeric enzyme composed of a peripheral catalytic V1 complex (components A to H) attached to an integral membrane V0 proton pore complex (components: a, c, c', c'', d, e, f and VOA1).

It is found in the vacuole membrane. Non-catalytic subunit of the V1 complex of vacuolar(H+)-ATPase (V-ATPase), a multisubunit enzyme composed of a peripheral complex (V1) that hydrolyzes ATP and a membrane integral complex (V0) that translocates protons. Plays an important role in resistance to several stresses, as well as in autophagy and virulence. The chain is V-type proton ATPase subunit B from Candida albicans (strain SC5314 / ATCC MYA-2876) (Yeast).